Here is a 367-residue protein sequence, read N- to C-terminus: Peptide chain release factor 1 (367 aa).

The residue at position 238 (Gln-238) is an N5-methylglutamine.

It belongs to the prokaryotic/mitochondrial release factor family. Post-translationally, methylated by PrmC. Methylation increases the termination efficiency of RF1.

It is found in the cytoplasm. Peptide chain release factor 1 directs the termination of translation in response to the peptide chain termination codons UAG and UAA. This chain is Peptide chain release factor 1, found in Dictyoglomus turgidum (strain DSM 6724 / Z-1310).